Here is a 425-residue protein sequence, read N- to C-terminus: Serine--tRNA ligase (425 aa).

Residue 230 to 232 (TAE) coordinates L-serine. 261–263 (RSE) lines the ATP pocket. Glu284 provides a ligand contact to L-serine. 348–351 (EISS) is an ATP binding site. Residue Ser384 coordinates L-serine.

Belongs to the class-II aminoacyl-tRNA synthetase family. Type-1 seryl-tRNA synthetase subfamily. As to quaternary structure, homodimer. The tRNA molecule binds across the dimer.

It is found in the cytoplasm. The catalysed reaction is tRNA(Ser) + L-serine + ATP = L-seryl-tRNA(Ser) + AMP + diphosphate + H(+). It carries out the reaction tRNA(Sec) + L-serine + ATP = L-seryl-tRNA(Sec) + AMP + diphosphate + H(+). It participates in aminoacyl-tRNA biosynthesis; selenocysteinyl-tRNA(Sec) biosynthesis; L-seryl-tRNA(Sec) from L-serine and tRNA(Sec): step 1/1. In terms of biological role, catalyzes the attachment of serine to tRNA(Ser). Is also able to aminoacylate tRNA(Sec) with serine, to form the misacylated tRNA L-seryl-tRNA(Sec), which will be further converted into selenocysteinyl-tRNA(Sec). This Maridesulfovibrio salexigens (strain ATCC 14822 / DSM 2638 / NCIMB 8403 / VKM B-1763) (Desulfovibrio salexigens) protein is Serine--tRNA ligase.